The sequence spans 193 residues: DNA damage-inducible transcript 4-like protein (193 aa).

This sequence belongs to the DDIT4 family. As to expression, expressed in heart, skeletal muscle and testis.

Its subcellular location is the cytoplasm. Functionally, inhibits cell growth by regulating the TOR signaling pathway upstream of the TSC1-TSC2 complex and downstream of AKT1. The sequence is that of DNA damage-inducible transcript 4-like protein (Ddit4l) from Rattus norvegicus (Rat).